A 499-amino-acid chain; its full sequence is Glutamate--tRNA ligase (499 aa).

Residues 10-20 (PSPTGTPHVGM) carry the 'HIGH' region motif. Residues 255–259 (KLSKR) carry the 'KMSKS' region motif. An ATP-binding site is contributed by lysine 258.

It belongs to the class-I aminoacyl-tRNA synthetase family. Glutamate--tRNA ligase type 1 subfamily. In terms of assembly, monomer.

It localises to the cytoplasm. It carries out the reaction tRNA(Glu) + L-glutamate + ATP = L-glutamyl-tRNA(Glu) + AMP + diphosphate. Catalyzes the attachment of glutamate to tRNA(Glu) in a two-step reaction: glutamate is first activated by ATP to form Glu-AMP and then transferred to the acceptor end of tRNA(Glu). The polypeptide is Glutamate--tRNA ligase (Corynebacterium urealyticum (strain ATCC 43042 / DSM 7109)).